A 150-amino-acid polypeptide reads, in one-letter code: Putative transmembrane protein DDB_G0277665 (150 aa).

The next 2 helical transmembrane spans lie at 4–24 (TLII…FNIL) and 42–62 (VIVG…FLPL).

It localises to the membrane. In Dictyostelium discoideum (Social amoeba), this protein is Putative transmembrane protein DDB_G0277665.